We begin with the raw amino-acid sequence, 542 residues long: uncharacterized protein (542 aa).

A compositionally biased stretch (low complexity) spans 125 to 138; the sequence is ANSNSSSTGRDSTP. Disordered regions lie at residues 125–182, 194–333, 390–428, and 459–487; these read ANSN…NHHN, LPPT…CSSS, SSSTLSSSSSTKTNNNSTTTTTTTTAKTSSTSTNDYSSI, and SSSSSSHVMKRSNGSSNGGNSTIQSPSCN. Residues 202-213 are compositionally biased toward polar residues; it reads QKPSFLSNSNQI. Low complexity-rich tracts occupy residues 228-306, 314-333, 390-423, and 459-479; these read SYTS…NSNN, NKLSNSNHSTNSNFSQCSSS, SSSTLSSSSSTKTNNNSTTTTTTTTAKTSSTSTN, and SSSSSSHVMKRSNGSSNGGNS.

This is an uncharacterized protein from Dictyostelium discoideum (Social amoeba).